The following is a 210-amino-acid chain: Thiamine-phosphate synthase (210 aa).

4-amino-2-methyl-5-(diphosphooxymethyl)pyrimidine is bound by residues 39-43 (QLREK) and Asn71. Mg(2+)-binding residues include Asp72 and Asp91. Ser110 provides a ligand contact to 4-amino-2-methyl-5-(diphosphooxymethyl)pyrimidine. 136–138 (TST) is a binding site for 2-[(2R,5Z)-2-carboxy-4-methylthiazol-5(2H)-ylidene]ethyl phosphate. Lys139 contributes to the 4-amino-2-methyl-5-(diphosphooxymethyl)pyrimidine binding site. 2-[(2R,5Z)-2-carboxy-4-methylthiazol-5(2H)-ylidene]ethyl phosphate is bound by residues Gly166 and 186 to 187 (VS).

This sequence belongs to the thiamine-phosphate synthase family. The cofactor is Mg(2+).

The enzyme catalyses 2-[(2R,5Z)-2-carboxy-4-methylthiazol-5(2H)-ylidene]ethyl phosphate + 4-amino-2-methyl-5-(diphosphooxymethyl)pyrimidine + 2 H(+) = thiamine phosphate + CO2 + diphosphate. The catalysed reaction is 2-(2-carboxy-4-methylthiazol-5-yl)ethyl phosphate + 4-amino-2-methyl-5-(diphosphooxymethyl)pyrimidine + 2 H(+) = thiamine phosphate + CO2 + diphosphate. It catalyses the reaction 4-methyl-5-(2-phosphooxyethyl)-thiazole + 4-amino-2-methyl-5-(diphosphooxymethyl)pyrimidine + H(+) = thiamine phosphate + diphosphate. It functions in the pathway cofactor biosynthesis; thiamine diphosphate biosynthesis; thiamine phosphate from 4-amino-2-methyl-5-diphosphomethylpyrimidine and 4-methyl-5-(2-phosphoethyl)-thiazole: step 1/1. Functionally, condenses 4-methyl-5-(beta-hydroxyethyl)thiazole monophosphate (THZ-P) and 2-methyl-4-amino-5-hydroxymethyl pyrimidine pyrophosphate (HMP-PP) to form thiamine monophosphate (TMP). The protein is Thiamine-phosphate synthase of Ruminiclostridium cellulolyticum (strain ATCC 35319 / DSM 5812 / JCM 6584 / H10) (Clostridium cellulolyticum).